The following is a 290-amino-acid chain: Glutamyl-Q tRNA(Asp) synthetase (290 aa).

Residues 9–13 (RFAPS) and Glu45 contribute to the L-glutamate site. Residues 12–22 (PSPSGSLHFGS) carry the 'HIGH' region motif. Zn(2+)-binding residues include Cys101, Cys103, Tyr115, and Cys119. Residues Tyr170 and Arg188 each contribute to the L-glutamate site. Residues 226-230 (KLSKQ) carry the 'KMSKS' region motif. Residue Lys229 participates in ATP binding.

It belongs to the class-I aminoacyl-tRNA synthetase family. GluQ subfamily. Zn(2+) is required as a cofactor.

Catalyzes the tRNA-independent activation of glutamate in presence of ATP and the subsequent transfer of glutamate onto a tRNA(Asp). Glutamate is transferred on the 2-amino-5-(4,5-dihydroxy-2-cyclopenten-1-yl) moiety of the queuosine in the wobble position of the QUC anticodon. The polypeptide is Glutamyl-Q tRNA(Asp) synthetase (Shewanella amazonensis (strain ATCC BAA-1098 / SB2B)).